The following is a 307-amino-acid chain: G-protein coupled receptor 35 (307 aa).

The Extracellular portion of the chain corresponds to 1–18 (MNSTTCNSTLTWPASVNN). N-linked (GlcNAc...) asparagine glycosylation is found at N2 and N7. The chain crosses the membrane as a helical span at residues 19–39 (FFIIYSALLLVLGLLLNSVAL). Over 40–53 (WVFCYRMHQWTETR) the chain is Cytoplasmic. The chain crosses the membrane as a helical span at residues 54 to 74 (IYMTNLAVADLCLLCSLPFVL). Residues 75-88 (YSLKYSSSDTPVCQ) are Extracellular-facing. Cysteines 87 and 160 form a disulfide. Residues 89 to 110 (LSQGIYLANRYMSISLVTAIAV) form a helical membrane-spanning segment. Residues 111-129 (DRYVAVRHPLRARELRSPR) are Cytoplasmic-facing. A helical membrane pass occupies residues 130 to 150 (QAAAVCVALWVIVVTSLVVRW). The Extracellular portion of the chain corresponds to 151-176 (RLGMQEGGFCFSSQTRRNFSTTAFSL). Residues 177–197 (LGFYLPLAIVVFCSLQVVTVL) traverse the membrane as a helical segment. Residues 198-217 (SRRPAADVGQAEATQKATHM) lie on the Cytoplasmic side of the membrane. A helical membrane pass occupies residues 218–238 (VWANLAVFVICFLPLHVVLTV). The Extracellular segment spans residues 239-257 (QVSLNLNTCAARDTFSRAL). Residues 258–278 (SITGKLSDTNCCLDAICYYYM) form a helical membrane-spanning segment. Residues 279 to 307 (AREFQEASKPATSSNTPHKSQDSQILSLT) are Cytoplasmic-facing. Residues S286, S292, S298, and S301 each carry the phosphoserine modification. Residues 288–307 (PATSSNTPHKSQDSQILSLT) are disordered.

This sequence belongs to the G-protein coupled receptor 1 family. Multiply phosphorylated in clusters of serines and threonines in the C-terminal tail. Phosphorylation of Ser-298 and Ser-301 is mediated by GRK5 and/or GRK6. Predominantly expressed in immune and gastrointestinal tissues. Strongly GPR35 expressed in colonic macrophages.

It localises to the cell membrane. Its function is as follows. G-protein coupled receptor that binds to several ligands including the tryptophan metabolite kynurenic acid (KYNA), lysophosphatidic acid (LPA) or 5-hydroxyindoleacetic acid (5-HIAA) with high affinity, leading to rapid and transient activation of numerous intracellular signaling pathways. Plays a role in neutrophil recruitment to sites of inflammation and bacterial clearance through the major serotonin metabolite 5-HIAA that acts as a physiological ligand. Stimulates lipid metabolism, thermogenic, and anti-inflammatory gene expression in adipose tissue once activated by kynurenic acid. In macrophages, activation by lysophosphatidic acid promotes GPR35-induced signaling with a distinct transcriptional profile characterized by TNF production associated with ERK and NF-kappa-B activation. In turn, induces chemotaxis of macrophages. This is G-protein coupled receptor 35 (Gpr35) from Mus musculus (Mouse).